The primary structure comprises 587 residues: Deoxynucleoside triphosphate triphosphohydrolase sahd-1 (587 aa).

One can recognise an HD domain in the interval 92–262; it reads RFVHSLGTFS…GHDVDKMDYL (171 aa). The Zn(2+) site is built by His-95, His-134, Asp-135, and Asp-257. Residues 554–587 are disordered; that stretch reads EKFLTPRKRSPQDSPDEVSSSCSTAKRRLEFGSS. Position 558 is a phosphothreonine (Thr-558).

The protein belongs to the SAMHD1 family. As to quaternary structure, homodimer. Homotetramer; in dGTP-bound form. The cofactor is Zn(2+).

The protein resides in the nucleus. It localises to the chromosome. The catalysed reaction is a 2'-deoxyribonucleoside 5'-triphosphate + H2O = a 2'-deoxyribonucleoside + triphosphate + H(+). Its activity is regulated as follows. Allosterically activated and regulated by GTP or dGTP. Allosteric activation promotes the formation of highly active homotetramers. Phosphorylation impairs homotetramerization, thereby inhibiting dNTPase activity. Has deoxynucleoside triphosphate (dNTPase) activity. dNTPase activity acts as a regulator of DNA precursor pools by regulating dNTP pools. Phosphorylation acts as a switch to control dNTPase-dependent and -independent functions. The sequence is that of Deoxynucleoside triphosphate triphosphohydrolase sahd-1 from Caenorhabditis elegans.